A 334-amino-acid polypeptide reads, in one-letter code: CRISPR-associated protein Cas1 3 (334 aa).

Mn(2+)-binding residues include E165, H230, and E245.

Belongs to the CRISPR-associated endonuclease Cas1 family. Homodimer, forms a heterotetramer with a Cas2 homodimer. Mg(2+) is required as a cofactor. Requires Mn(2+) as cofactor.

Functionally, CRISPR (clustered regularly interspaced short palindromic repeat), is an adaptive immune system that provides protection against mobile genetic elements (viruses, transposable elements and conjugative plasmids). CRISPR clusters contain spacers, sequences complementary to antecedent mobile elements, and target invading nucleic acids. CRISPR clusters are transcribed and processed into CRISPR RNA (crRNA). Acts as a dsDNA endonuclease. Involved in the integration of spacer DNA into the CRISPR cassette. The sequence is that of CRISPR-associated protein Cas1 3 from Methanobrevibacter ruminantium (strain ATCC 35063 / DSM 1093 / JCM 13430 / OCM 146 / M1) (Methanobacterium ruminantium).